The sequence spans 637 residues: Limonene synthase, chloroplastic (637 aa).

The transit peptide at 1 to 56 directs the protein to the chloroplast; sequence MALLSIVSLQVPKSCGLKSLISSSNVQKALCISTAVPTLRMRRRQKALVINMKLTT. Mg(2+) contacts are provided by Asp-388, Asp-392, and Asp-540. Positions 388–392 match the DDXXD motif motif; that stretch reads DDIYD.

This sequence belongs to the terpene synthase family. Tpsd subfamily. Requires Mg(2+) as cofactor. It depends on Mn(2+) as a cofactor. K(+) is required as a cofactor.

The protein resides in the plastid. The protein localises to the chloroplast. It catalyses the reaction (2E)-geranyl diphosphate = (4S)-limonene + diphosphate. Its pathway is terpene metabolism; oleoresin biosynthesis. Functionally, involved in defensive oleoresin formation in conifers in response to insect attack or other injury. Involved in monoterpene (C10) olefins biosynthesis. This is Limonene synthase, chloroplastic (ag10) from Abies grandis (Grand fir).